Reading from the N-terminus, the 268-residue chain is Tryptophan synthase alpha chain (268 aa).

Residues E49 and D60 each act as proton acceptor in the active site.

This sequence belongs to the TrpA family. In terms of assembly, tetramer of two alpha and two beta chains.

It carries out the reaction (1S,2R)-1-C-(indol-3-yl)glycerol 3-phosphate + L-serine = D-glyceraldehyde 3-phosphate + L-tryptophan + H2O. It participates in amino-acid biosynthesis; L-tryptophan biosynthesis; L-tryptophan from chorismate: step 5/5. Its function is as follows. The alpha subunit is responsible for the aldol cleavage of indoleglycerol phosphate to indole and glyceraldehyde 3-phosphate. This chain is Tryptophan synthase alpha chain, found in Xanthomonas oryzae pv. oryzae (strain MAFF 311018).